The chain runs to 846 residues: Choline trimethylamine-lyase (846 aa).

The 659-residue stretch at 60-718 (PRHVKLKENF…LLGASANGRR (659 aa)) folds into the PFL domain. Cys-489 functions as the Cysteine radical intermediate in the catalytic mechanism. Glu-491 functions as the Proton acceptor in the catalytic mechanism. The 122-residue stretch at 725–846 (DGISPTQGAD…IISRTMLHGF (122 aa)) folds into the Glycine radical domain. Gly-821 carries the glycine radical modification.

Belongs to the glycyl radical enzyme (GRE) family. CutC subfamily. In terms of assembly, homodimer. Post-translationally, requires the activating protein CutD to generate the key active site glycyl radical on Gly-821 that is involved in catalysis.

The enzyme catalyses choline = trimethylamine + acetaldehyde. Its pathway is amine and polyamine metabolism; choline degradation. Functionally, glycine radical enzyme that catalyzes the cleavage of a C-N bond in choline, producing trimethylamine (TMA) and acetaldehyde. Is involved in the anaerobic choline utilization pathway that allows D.alaskensis to grow on choline as a source of carbon and energy. Is strictly specific for choline as substrate. The sequence is that of Choline trimethylamine-lyase from Oleidesulfovibrio alaskensis (strain ATCC BAA-1058 / DSM 17464 / G20) (Desulfovibrio alaskensis).